The following is a 341-amino-acid chain: Thiamine-phosphate synthase (341 aa).

The interval 1 to 123 (MAVVEEQVVL…AAAAKEWRYR (123 aa)) is unknown. Residues 61–80 (AARDTPHDPGTGLEHPDEGV) form a disordered region. Positions 124 to 341 (VYTLESTATG…AWFLERLNRG (218 aa)) are thiamine-phosphate synthase. Residues 171-175 (QLREK) and Asn203 contribute to the 4-amino-2-methyl-5-(diphosphooxymethyl)pyrimidine site. Residues Asp204 and Asp223 each coordinate Mg(2+). Ser242 is a 4-amino-2-methyl-5-(diphosphooxymethyl)pyrimidine binding site. Residue 268–270 (TPT) participates in 2-[(2R,5Z)-2-carboxy-4-methylthiazol-5(2H)-ylidene]ethyl phosphate binding. A 4-amino-2-methyl-5-(diphosphooxymethyl)pyrimidine-binding site is contributed by Lys271. Gly298 contacts 2-[(2R,5Z)-2-carboxy-4-methylthiazol-5(2H)-ylidene]ethyl phosphate.

It belongs to the thiamine-phosphate synthase family. The cofactor is Mg(2+).

The enzyme catalyses 2-[(2R,5Z)-2-carboxy-4-methylthiazol-5(2H)-ylidene]ethyl phosphate + 4-amino-2-methyl-5-(diphosphooxymethyl)pyrimidine + 2 H(+) = thiamine phosphate + CO2 + diphosphate. The catalysed reaction is 2-(2-carboxy-4-methylthiazol-5-yl)ethyl phosphate + 4-amino-2-methyl-5-(diphosphooxymethyl)pyrimidine + 2 H(+) = thiamine phosphate + CO2 + diphosphate. It catalyses the reaction 4-methyl-5-(2-phosphooxyethyl)-thiazole + 4-amino-2-methyl-5-(diphosphooxymethyl)pyrimidine + H(+) = thiamine phosphate + diphosphate. It participates in cofactor biosynthesis; thiamine diphosphate biosynthesis; thiamine phosphate from 4-amino-2-methyl-5-diphosphomethylpyrimidine and 4-methyl-5-(2-phosphoethyl)-thiazole: step 1/1. In terms of biological role, condenses 4-methyl-5-(beta-hydroxyethyl)thiazole monophosphate (THZ-P) and 2-methyl-4-amino-5-hydroxymethyl pyrimidine pyrophosphate (HMP-PP) to form thiamine monophosphate (TMP). This chain is Thiamine-phosphate synthase, found in Gloeobacter violaceus (strain ATCC 29082 / PCC 7421).